Reading from the N-terminus, the 66-residue chain is Alpha-conotoxin Vc1a (66 aa).

An N-terminal signal peptide occupies residues 1–25 (MGMRMMFTVFLLVVLATTVVSSTSG). The propeptide occupies 26 to 47 (RREFRGRNAAAKASDLVSLTDK). Intrachain disulfides connect C51-C57 and C52-C65. The ser-Xaa-Pro motif, crucial for potent interaction with nAChR stretch occupies residues 53–55 (SDP). Key region for inhibition of alpha-9-alpha-10/CHRNA9-CHRNA10 nAChR regions lie at residues 54–56 (DPR) and 60–64 (DHPEI). The residue at position 55 (P55) is a 4-hydroxyproline. E63 is subject to 4-carboxyglutamate. C65 is subject to Cysteine amide.

Belongs to the conotoxin A superfamily. In terms of processing, vc1.1 is described as having no post-translational modifications (except C-terminal amidation), whereas Vc1a contains a hydroxyproline at Pro-55 and a 4-carboxyglutamate at Glu-63 (and a C-terminal amidation). Post-translationally, hydroxylation of Pro-55 is not important for inhibition of alpha-9-alpha-10/CHRNA9-CHRNA10 nAChRs, since [P6O]Vc1.1 (Pro-55 hydroxylated) shows similar inhibition than native toxin (IC(50)=99.1 nM). In contrast, hydroxylation of Pro-55 seems to impair inhibition of HVA calcium channel currents, since [P6O]Vc1.1 has no effect on HVA calcium channel currents. In vivo, hydroxylation of Pro-55 seems to induce the loss of analgesic effects in rat models of neuropathic pain, since [P6O]Vc1.1 has no effect on mechanical allodynia. Gamma-carboxylation of Glu-63 is not important for inhibition of alpha-9-alpha-10/CHRNA9-CHRNA10 nAChRs, since [E14gamma]Vc1.1 (carboxyglutamate at Glu-63) shows similar inhibition than native toxin (IC(50)=65.3 nM). In contrast, gamma-carboxylation of Glu-63 seems to impair inhibition of HVA calcium channel currents, since [E14gamma]Vc1.1 has no effect on HVA calcium channel currents. In terms of processing, non-native isomers 'ribbon' (with disulfide connectivity C1-C4; C2-C3) and 'beads' (with disulfide connectivity C1-C2; C3-C4) of Vc1.1 also inhibit HVA calcium channel currents in rat DRG neurons (20-30% inhibition at 1 uM toxin). It has been shown that both reduced and alkylated Vc1.1 have no effect on HVA calcium channel currents. The observed activity can be attributed to specific isomers. Post-translationally, [C3S]Vc1.1(1-8) mutant is C-terminally amidated. Expressed by the venom duct.

It localises to the secreted. Functionally, alpha-conotoxins act on postsynaptic membranes, they bind to the nicotinic acetylcholine receptors (nAChR) and thus inhibit them. This toxin (native toxin Vc1a; hydroxylated and gamma-carboxylated) blocks alpha-9-alpha-10/CHRNA9-CHRNA10 nAChRs (IC(50)=62.9 nM). In contrast to the non-post-translationally modified analog Vc1.1, Vc1a does not inhibit high voltage-activated (HVA) calcium channel currents. In vivo, in contrast to Vc1.1, Vc1a does not show analgesic effects in rat models of neuropathic pain. Its function is as follows. The synthetic peptide Vc1.1 (a non-hydroxylated and non-gamma-carboxylated analog of Vc1a) has two types of targets. It blocks alpha-9-alpha-10/CHRNA9-CHRNA10 nAChRs (on rat receptors, IC(50)=19-109 nM) (with preference for rat over human receptors) and inhibits high voltage-activated (HVA) calcium channel (Cav2.2, Cav2.3) currents by acting on GABA(B) receptors (GABBR1 and GABBR2) (IC(50)=1.7 nM). It also shows moderate inhibition on alpha-6/alpha-3-beta-2-beta-3 (CHRNA6/CHRNA3-CHRNB2-CHRNB3) (IC(50)=140 nM) and alpha-6/alpha-3-beta-4 (CHRNA6/CHRNA3-CHRNB4) (IC(50)=980 nM). On alpha-9-alpha-10/CHRNA9-CHRNA10 nAChR, it most likely interacts with the alpha-10(+)/alpha-9(-)interface of the receptor. In vivo, it acts as a powerful analgesic in rat models of neuropathic pain. This is Alpha-conotoxin Vc1a from Conus victoriae (Queen Victoria cone).